The sequence spans 95 residues: Small ribosomal subunit protein bS18 (95 aa).

Belongs to the bacterial ribosomal protein bS18 family. In terms of assembly, part of the 30S ribosomal subunit. Forms a tight heterodimer with protein bS6.

Functionally, binds as a heterodimer with protein bS6 to the central domain of the 16S rRNA, where it helps stabilize the platform of the 30S subunit. In Rickettsia rickettsii (strain Sheila Smith), this protein is Small ribosomal subunit protein bS18.